Here is a 364-residue protein sequence, read N- to C-terminus: Dermonecrotic toxin SPH (364 aa).

The signal sequence occupies residues 1 to 17 (MIRIFALITALAITVKC). His29 (nucleophile) is an active-site residue. Glu49 and Asp51 together coordinate Mg(2+). His65 is an active-site residue. 2 cysteine pairs are disulfide-bonded: Cys69-Cys75 and Cys71-Cys215. Mg(2+) is bound at residue Asp109.

This sequence belongs to the arthropod phospholipase D family. Mg(2+) is required as a cofactor. Expressed in salivary glands.

The protein resides in the secreted. The catalysed reaction is an N-(acyl)-sphingosylphosphocholine = an N-(acyl)-sphingosyl-1,3-cyclic phosphate + choline. The enzyme catalyses an N-(acyl)-sphingosylphosphoethanolamine = an N-(acyl)-sphingosyl-1,3-cyclic phosphate + ethanolamine. It catalyses the reaction a 1-acyl-sn-glycero-3-phosphocholine = a 1-acyl-sn-glycero-2,3-cyclic phosphate + choline. It carries out the reaction a 1-acyl-sn-glycero-3-phosphoethanolamine = a 1-acyl-sn-glycero-2,3-cyclic phosphate + ethanolamine. Its function is as follows. Dermonecrotic toxins cleave the phosphodiester linkage between the phosphate and headgroup of certain phospholipids (sphingolipid and lysolipid substrates), forming an alcohol (often choline) and a cyclic phosphate. Acts on sphingomyelin (SM). It may also act on ceramide phosphoethanolamine (CPE), lysophosphatidylcholine (LPC) and lysophosphatidylethanolamine (LPE), but not on lysophosphatidylserine (LPS), and lysophosphatidylglycerol (LPG). It acts by transphosphatidylation, releasing exclusively cyclic phosphate products as second products. Induces dermonecrosis, hemolysis, increased vascular permeability, edema, inflammatory response, and platelet aggregation. The sequence is that of Dermonecrotic toxin SPH (SPH) from Ixodes scapularis (Black-legged tick).